The sequence spans 62 residues: MVDYTQRPKSRFLRVKCNDCENEQIIFGSASRKITCVVCGRTLAEPTGGKSTITTHILEVLE.

The Zn(2+) site is built by Cys-17, Cys-20, Cys-36, and Cys-39. Residues 17–39 (CNDCENEQIIFGSASRKITCVVC) form a C4-type zinc finger.

This sequence belongs to the eukaryotic ribosomal protein eS27 family. As to quaternary structure, part of the 30S ribosomal subunit. Zn(2+) serves as cofactor.

The protein is Small ribosomal subunit protein eS27 of Methanosarcina mazei (strain ATCC BAA-159 / DSM 3647 / Goe1 / Go1 / JCM 11833 / OCM 88) (Methanosarcina frisia).